We begin with the raw amino-acid sequence, 127 residues long: UPF0738 protein Bsph_1225 (127 aa).

The protein belongs to the UPF0738 family.

In Lysinibacillus sphaericus (strain C3-41), this protein is UPF0738 protein Bsph_1225.